We begin with the raw amino-acid sequence, 581 residues long: Proline--tRNA ligase (581 aa).

The protein belongs to the class-II aminoacyl-tRNA synthetase family. ProS type 1 subfamily. Homodimer.

The protein localises to the cytoplasm. The enzyme catalyses tRNA(Pro) + L-proline + ATP = L-prolyl-tRNA(Pro) + AMP + diphosphate. Catalyzes the attachment of proline to tRNA(Pro) in a two-step reaction: proline is first activated by ATP to form Pro-AMP and then transferred to the acceptor end of tRNA(Pro). As ProRS can inadvertently accommodate and process non-cognate amino acids such as alanine and cysteine, to avoid such errors it has two additional distinct editing activities against alanine. One activity is designated as 'pretransfer' editing and involves the tRNA(Pro)-independent hydrolysis of activated Ala-AMP. The other activity is designated 'posttransfer' editing and involves deacylation of mischarged Ala-tRNA(Pro). The misacylated Cys-tRNA(Pro) is not edited by ProRS. The chain is Proline--tRNA ligase from Methylibium petroleiphilum (strain ATCC BAA-1232 / LMG 22953 / PM1).